A 262-amino-acid polypeptide reads, in one-letter code: Small ribosomal subunit protein eS1 (262 aa).

It belongs to the eukaryotic ribosomal protein eS1 family. Component of the small ribosomal subunit. Mature ribosomes consist of a small (40S) and a large (60S) subunit. The 40S subunit contains about 33 different proteins and 1 molecule of RNA (18S). The 60S subunit contains about 49 different proteins and 3 molecules of RNA (25S, 5.8S and 5S).

It localises to the cytoplasm. This chain is Small ribosomal subunit protein eS1, found in Plasmodium knowlesi (strain H).